The following is a 249-amino-acid chain: Oxidoreductase asL5 (249 aa).

Residues isoleucine 21, lysine 45, asparagine 90, tyrosine 155, lysine 159, isoleucine 188, and threonine 190 each coordinate NADP(+). The active-site Proton acceptor is tyrosine 155. Lysine 159 (lowers pKa of active site Tyr) is an active-site residue.

It belongs to the short-chain dehydrogenases/reductases (SDR) family.

Its function is as follows. Oxidoreductase; part of the gene cluster that mediates the biosynthesis of xenovulene A, an unusual meroterpenoid that has potent inhibitory effects on the human gamma-aminobutyrate A (GABAA) benzodiazepine receptor. The first step of xenovulene A biosynthesis is the biosynthesis of 3-methylorcinaldehyde performed by the non-reducing polyketide synthase aspks1. The salicylate hydroxylase asL1 then catalyzes the oxidative dearomatization of 3-methylorcinaldehyde to yield a dearomatized hydroxycyclohexadione. The 2-oxoglutarate-dependent dioxygenase asL3 further catalyzes the oxidative ring expansion to provide the first tropolone metabolite. The cytochrome P450 monooxygenase asR2 allows the synthesis of tropolone hemiacetal. In parallel, a previously unrecognised class of terpene cyclase, asR6, produces alpha-humulene from farnesylpyrophosphate (FPP). The putative Diels-Alderase asR5 probably catalyzes the formation of the tropolone-humulene skeleton by linking humulene and the polyketide moiety. Oxidative-ring contractions catalyzed by asL4 and asL6 then processively remove carbon atoms from the polyketide to yield xenovulene A. This Sarocladium schorii (Acremonium strictum (strain IMI 501407)) protein is Oxidoreductase asL5.